Reading from the N-terminus, the 526-residue chain is Bifunctional purine biosynthesis protein PurH (526 aa).

The MGS-like domain maps to 1–149; sequence MLHSLPIRRA…KNHEAVTVVV (149 aa).

This sequence belongs to the PurH family.

The catalysed reaction is (6R)-10-formyltetrahydrofolate + 5-amino-1-(5-phospho-beta-D-ribosyl)imidazole-4-carboxamide = 5-formamido-1-(5-phospho-D-ribosyl)imidazole-4-carboxamide + (6S)-5,6,7,8-tetrahydrofolate. It catalyses the reaction IMP + H2O = 5-formamido-1-(5-phospho-D-ribosyl)imidazole-4-carboxamide. It functions in the pathway purine metabolism; IMP biosynthesis via de novo pathway; 5-formamido-1-(5-phospho-D-ribosyl)imidazole-4-carboxamide from 5-amino-1-(5-phospho-D-ribosyl)imidazole-4-carboxamide (10-formyl THF route): step 1/1. It participates in purine metabolism; IMP biosynthesis via de novo pathway; IMP from 5-formamido-1-(5-phospho-D-ribosyl)imidazole-4-carboxamide: step 1/1. In Rhodospirillum rubrum (strain ATCC 11170 / ATH 1.1.1 / DSM 467 / LMG 4362 / NCIMB 8255 / S1), this protein is Bifunctional purine biosynthesis protein PurH.